A 417-amino-acid polypeptide reads, in one-letter code: Multifunctional CCA protein (417 aa).

ATP-binding residues include Gly-8 and Arg-11. Gly-8 and Arg-11 together coordinate CTP. Mg(2+) is bound by residues Asp-21 and Asp-23. 3 residues coordinate ATP: Arg-91, Arg-137, and Arg-140. Residues Arg-91, Arg-137, and Arg-140 each contribute to the CTP site. An HD domain is found at Ser-225–Phe-326.

It belongs to the tRNA nucleotidyltransferase/poly(A) polymerase family. Bacterial CCA-adding enzyme type 1 subfamily. Monomer. Can also form homodimers and oligomers. Mg(2+) is required as a cofactor. It depends on Ni(2+) as a cofactor.

The enzyme catalyses a tRNA precursor + 2 CTP + ATP = a tRNA with a 3' CCA end + 3 diphosphate. It catalyses the reaction a tRNA with a 3' CCA end + 2 CTP + ATP = a tRNA with a 3' CCACCA end + 3 diphosphate. Functionally, catalyzes the addition and repair of the essential 3'-terminal CCA sequence in tRNAs without using a nucleic acid template. Adds these three nucleotides in the order of C, C, and A to the tRNA nucleotide-73, using CTP and ATP as substrates and producing inorganic pyrophosphate. tRNA 3'-terminal CCA addition is required both for tRNA processing and repair. Also involved in tRNA surveillance by mediating tandem CCA addition to generate a CCACCA at the 3' terminus of unstable tRNAs. While stable tRNAs receive only 3'-terminal CCA, unstable tRNAs are marked with CCACCA and rapidly degraded. The polypeptide is Multifunctional CCA protein (Neisseria meningitidis serogroup C / serotype 2a (strain ATCC 700532 / DSM 15464 / FAM18)).